Reading from the N-terminus, the 289-residue chain is ATP phosphoribosyltransferase (289 aa).

The protein belongs to the ATP phosphoribosyltransferase family. Long subfamily. Requires Mg(2+) as cofactor.

It localises to the cytoplasm. It carries out the reaction 1-(5-phospho-beta-D-ribosyl)-ATP + diphosphate = 5-phospho-alpha-D-ribose 1-diphosphate + ATP. Its pathway is amino-acid biosynthesis; L-histidine biosynthesis; L-histidine from 5-phospho-alpha-D-ribose 1-diphosphate: step 1/9. Its activity is regulated as follows. Feedback inhibited by histidine. Catalyzes the condensation of ATP and 5-phosphoribose 1-diphosphate to form N'-(5'-phosphoribosyl)-ATP (PR-ATP). Has a crucial role in the pathway because the rate of histidine biosynthesis seems to be controlled primarily by regulation of HisG enzymatic activity. This chain is ATP phosphoribosyltransferase, found in Koribacter versatilis (strain Ellin345).